Consider the following 355-residue polypeptide: Protein MGF 360-3L (355 aa).

An ANK repeat occupies 60-92 (KLNTALVLAVKENNYDLIVLFTEWGANINYALL).

This sequence belongs to the asfivirus MGF 360 family.

Functionally, plays a role in virus cell tropism, and may be required for efficient virus replication in macrophages. The protein is Protein MGF 360-3L of Ornithodoros (relapsing fever ticks).